Reading from the N-terminus, the 408-residue chain is Peptidase T (408 aa).

H78 contacts Zn(2+). The active site involves D80. D140 serves as a coordination point for Zn(2+). E173 (proton acceptor) is an active-site residue. Positions 174, 196, and 379 each coordinate Zn(2+).

It belongs to the peptidase M20B family. Zn(2+) is required as a cofactor.

The protein resides in the cytoplasm. It carries out the reaction Release of the N-terminal residue from a tripeptide.. In terms of biological role, cleaves the N-terminal amino acid of tripeptides. This Escherichia coli O6:K15:H31 (strain 536 / UPEC) protein is Peptidase T.